The following is a 361-amino-acid chain: Probable G-protein coupled receptor 25 (361 aa).

Residues 1–39 (MAPTEPWSPSPGSAPWDYSGLDGLEELELCPAGDLPYGY) lie on the Extracellular side of the membrane. A helical transmembrane segment spans residues 40 to 60 (VYIPALYLAAFAVGLLGNAFV). Residues 61 to 75 (VWLLAGRRGPRRLVD) lie on the Cytoplasmic side of the membrane. A helical transmembrane segment spans residues 76–96 (TFVLHLAAADLGFVLTLPLWA). The Extracellular portion of the chain corresponds to 97–126 (AAAALGGRWPFGDGLCKLSSFALAGTRCAG). The helical transmembrane segment at 127–147 (ALLLAGMSVDRYLAVVKLLEA) threads the bilayer. The Cytoplasmic segment spans residues 148–155 (RPLRTPRC). Residues 156 to 176 (ALASCCGVWAVALLAGLPSLV) traverse the membrane as a helical segment. Topologically, residues 177 to 200 (YRGLQPLPGGQDSQCGEEPSHAFQ) are extracellular. Residues 201-220 (GLSLLLLLLTFVLPLVVTLF) traverse the membrane as a helical segment. Residues 221-242 (CYCRISRRLRRPPHVGRARRNS) are Cytoplasmic-facing. A helical transmembrane segment spans residues 243-263 (LRIIFAIESTFVGSWLPFSAL). The Extracellular segment spans residues 264–289 (RAVFHLARLGALPLPCPLLLALRWGL). A helical membrane pass occupies residues 290–310 (TIATCLAFVNSCANPLIYLLL). At 311-361 (DRSFRARALDGACGRTGRLARRISSASSLSRDDSSVFRCRAQAANTASASW) the chain is on the cytoplasmic side.

This sequence belongs to the G-protein coupled receptor 1 family.

The protein resides in the cell membrane. In terms of biological role, orphan receptor. The polypeptide is Probable G-protein coupled receptor 25 (GPR25) (Homo sapiens (Human)).